The sequence spans 191 residues: Fe/S biogenesis protein NfuA (191 aa).

Positions 149 and 152 each coordinate [4Fe-4S] cluster.

It belongs to the NfuA family. In terms of assembly, homodimer. Requires [4Fe-4S] cluster as cofactor.

Its function is as follows. Involved in iron-sulfur cluster biogenesis. Binds a 4Fe-4S cluster, can transfer this cluster to apoproteins, and thereby intervenes in the maturation of Fe/S proteins. Could also act as a scaffold/chaperone for damaged Fe/S proteins. The sequence is that of Fe/S biogenesis protein NfuA from Yersinia pseudotuberculosis serotype O:1b (strain IP 31758).